The following is a 492-amino-acid chain: 3-octaprenyl-4-hydroxybenzoate carboxy-lyase (492 aa).

A Mn(2+)-binding site is contributed by Asn177. Residues 180 to 182 (IYR), 194 to 196 (RWL), and 199 to 200 (RG) each bind prenylated FMN. Glu243 provides a ligand contact to Mn(2+). The active-site Proton donor is Asp292.

Belongs to the UbiD family. As to quaternary structure, homohexamer. Prenylated FMN serves as cofactor. Mn(2+) is required as a cofactor.

It localises to the cell membrane. It carries out the reaction a 4-hydroxy-3-(all-trans-polyprenyl)benzoate + H(+) = a 2-(all-trans-polyprenyl)phenol + CO2. Its pathway is cofactor biosynthesis; ubiquinone biosynthesis. In terms of biological role, catalyzes the decarboxylation of 3-octaprenyl-4-hydroxy benzoate to 2-octaprenylphenol, an intermediate step in ubiquinone biosynthesis. This Neisseria gonorrhoeae (strain ATCC 700825 / FA 1090) protein is 3-octaprenyl-4-hydroxybenzoate carboxy-lyase.